Here is a 129-residue protein sequence, read N- to C-terminus: Arsenate-mycothiol transferase ArsC2 (129 aa).

Belongs to the low molecular weight phosphotyrosine protein phosphatase family.

Its subcellular location is the cytoplasm. The enzyme catalyses mycothiol + arsenate = arseno-mycothiol + H2O. Functionally, involved in defense against toxic arsenate. Involved in the mycothiol/myoredoxin redox pathway which uses a mycothioltransferase mechanism; facilitates adduct formation between arsenate and mycothiol. This Corynebacterium glutamicum (strain ATCC 13032 / K051) protein is Arsenate-mycothiol transferase ArsC2 (arsC2).